The following is a 230-amino-acid chain: Large ribosomal subunit protein uL1 (230 aa).

Belongs to the universal ribosomal protein uL1 family. Part of the 50S ribosomal subunit.

Its function is as follows. Binds directly to 23S rRNA. The L1 stalk is quite mobile in the ribosome, and is involved in E site tRNA release. Functionally, protein L1 is also a translational repressor protein, it controls the translation of the L11 operon by binding to its mRNA. The polypeptide is Large ribosomal subunit protein uL1 (Bifidobacterium adolescentis (strain ATCC 15703 / DSM 20083 / NCTC 11814 / E194a)).